Reading from the N-terminus, the 335-residue chain is Pregnancy-specific beta-1-glycoprotein 2 (335 aa).

A signal peptide spans M1–A34. In terms of domain architecture, Ig-like V-type spans Q35–L144. Residues N61, N104, N111, and N199 are each glycosylated (N-linked (GlcNAc...) asparagine). 2 Ig-like C2-type domains span residues P147 to N234 and P239 to T317. Disulfide bonds link C169/C217 and C261/C301.

This sequence belongs to the immunoglobulin superfamily. CEA family.

It is found in the secreted. The polypeptide is Pregnancy-specific beta-1-glycoprotein 2 (PSG2) (Homo sapiens (Human)).